The primary structure comprises 180 residues: Adenine phosphoribosyltransferase (180 aa).

This sequence belongs to the purine/pyrimidine phosphoribosyltransferase family. Homodimer.

The protein resides in the cytoplasm. It carries out the reaction AMP + diphosphate = 5-phospho-alpha-D-ribose 1-diphosphate + adenine. It functions in the pathway purine metabolism; AMP biosynthesis via salvage pathway; AMP from adenine: step 1/1. Its function is as follows. Catalyzes a salvage reaction resulting in the formation of AMP, that is energically less costly than de novo synthesis. This chain is Adenine phosphoribosyltransferase, found in Mycobacterium avium (strain 104).